The chain runs to 377 residues: DAR GTPase 2, mitochondrial (377 aa).

The transit peptide at 1 to 21 (MATAKTWKIAREIGDAVIKAS) directs the protein to the mitochondrion. Residues 34–211 (AAAVRAISER…VLDTPGIFPP (178 aa)) enclose the CP-type G domain. A DARXP motif motif is present at residues 55-59 (DARIP). Residues 82-85 (NKME), 110-111 (NS), 150-155 (NVGKSA), and G207 contribute to the GTP site.

This sequence belongs to the TRAFAC class YlqF/YawG GTPase family. MTG1 subfamily.

It is found in the mitochondrion. GTPase that may function in mitochondrial ribosome assembly. The protein is DAR GTPase 2, mitochondrial of Arabidopsis thaliana (Mouse-ear cress).